We begin with the raw amino-acid sequence, 1410 residues long: DNA-directed RNA polymerase subunit beta' (1410 aa).

Zn(2+) is bound by residues cysteine 70, cysteine 72, cysteine 85, and cysteine 88. The Mg(2+) site is built by aspartate 460, aspartate 462, and aspartate 464. 4 residues coordinate Zn(2+): cysteine 814, cysteine 888, cysteine 895, and cysteine 898.

It belongs to the RNA polymerase beta' chain family. In terms of assembly, the RNAP catalytic core consists of 2 alpha, 1 beta, 1 beta' and 1 omega subunit. When a sigma factor is associated with the core the holoenzyme is formed, which can initiate transcription. Mg(2+) serves as cofactor. Requires Zn(2+) as cofactor.

It catalyses the reaction RNA(n) + a ribonucleoside 5'-triphosphate = RNA(n+1) + diphosphate. Functionally, DNA-dependent RNA polymerase catalyzes the transcription of DNA into RNA using the four ribonucleoside triphosphates as substrates. The protein is DNA-directed RNA polymerase subunit beta' of Saccharophagus degradans (strain 2-40 / ATCC 43961 / DSM 17024).